The sequence spans 157 residues: Transcriptional regulator AzlB (157 aa).

The HTH asnC-type domain occupies 5–66 (LDETDKAILR…IVDEKKLGIE (62 aa)). The H-T-H motif DNA-binding region spans 24–43 (NLNLSKKIGLSPSACLARTK).

Functionally, transcriptional repressor of the azlBCD operon involved in branched-chain amino acid transport. The polypeptide is Transcriptional regulator AzlB (azlB) (Bacillus subtilis (strain 168)).